The sequence spans 77 residues: MKAFIAILSIAIVLLLIVSIKETSAKDCKQECVKRYTNGDLTNFLKAEYGPERRGGKCYCEFTCHVKFYIYLKHELN.

An N-terminal signal peptide occupies residues 1 to 25 (MKAFIAILSIAIVLLLIVSIKETSA). Residues 26 to 46 (KDCKQECVKRYTNGDLTNFLK) constitute a propeptide that is removed on maturation.

The protein belongs to the scolopendra neurotoxin 3 family. In terms of processing, contains 2 disulfide bonds. In terms of tissue distribution, expressed by the venom gland.

It localises to the secreted. The chain is Putative neurotoxin 3 from Scolopendra mutilans (Chinese red-headed centipede).